The sequence spans 440 residues: Serine/threonine-protein kinase VRK1 (440 aa).

A Protein kinase domain is found at 37-317 (WKLGLPIGQG…LLEYTEKPLY (281 aa)). ATP-binding positions include 43–51 (IGQGGFGCI) and lysine 71. A Glycyl lysine isopeptide (Lys-Gly) (interchain with G-Cter in SUMO2) cross-link involves residue lysine 71. Catalysis depends on aspartate 177, which acts as the Proton acceptor. Phosphoserine; by PLK3 is present on serine 342. Residue serine 376 is modified to Phosphoserine. The residue at position 378 (threonine 378) is a Phosphothreonine. 2 stretches are compositionally biased toward polar residues: residues 379 to 391 (QVQE…SVES) and 398 to 410 (SMSQ…SSSD). Residues 379 to 440 (QVQEAAQTRS…GSRTRKKAQK (62 aa)) form a disordered region. The tract at residues 387–393 (RSVESQG) is required for interaction with the nucleosome.

It belongs to the protein kinase superfamily. CK1 Ser/Thr protein kinase family. VRK subfamily. In terms of assembly, interacts with HDAC1, KAT2B, SETDB1, KDM3A and KDM4A. Associates with the nucleosome through interactions with nucleosome DNA, histone H2A and histone H2B; the interaction with H2A and H2B is mediated by the nucleosome acidic patch, a cluster of negatively charged residues of H2A and H2B forming a cleft within the nucleosome core. Autophosphorylated at various serine and threonine residues. Autophosphorylation does not impair its ability to phosphorylate p53/TP53. Phosphorylation by PLK3 leads to induction of Golgi fragmentation during mitosis. In terms of tissue distribution, highly expressed in testis. Expressed in liver, kidney and muscle. Weakly expressed in thymus, bone marrow and spleen.

It localises to the nucleus. The protein resides in the cytoplasm. Its subcellular location is the cajal body. It carries out the reaction L-seryl-[protein] + ATP = O-phospho-L-seryl-[protein] + ADP + H(+). It catalyses the reaction L-threonyl-[protein] + ATP = O-phospho-L-threonyl-[protein] + ADP + H(+). With respect to regulation, active in presence of Mn(2+), Mg(2+) and Zn(2+), but is not functional with Ca(2+) or Cu(2+). Has a higher affinity for Mn(2+) than for Mg(2+). RAN inhibits its autophosphorylation and its ability to phosphorylate histone H3. Its function is as follows. Serine/threonine kinase involved in the regulation of key cellular processes including the cell cycle, nuclear condensation, transcription regulation, and DNA damage response. Controls chromatin organization and remodeling by mediating phosphorylation of histone H3 on 'Thr-4' and histone H2AX (H2aXT4ph). It also phosphorylates KAT5 in response to DNA damage, promoting KAT5 association with chromatin and histone acetyltransferase activity. Is involved in the regulation of cell cycle progression of neural progenitors, and is required for proper cortical neuronal migration. Is involved in neurite elongation and branching in motor neurons, and has an essential role in Cajal bodies assembly, acting through COIL phosphorylation and the control of coilin degradation. Involved in Golgi disassembly during the cell cycle: following phosphorylation by PLK3 during mitosis, required to induce Golgi fragmentation. Phosphorylates BANF1: disrupts its ability to bind DNA, reduces its binding to LEM domain-containing proteins and causes its relocalization from the nucleus to the cytoplasm. Phosphorylates TP53BP1 and p53/TP53 on 'Thr-18', preventing the interaction between p53/TP53 and MDM2. Phosphorylates ATF2 which activates its transcriptional activity. Phosphorylates JUN. The polypeptide is Serine/threonine-protein kinase VRK1 (Mus musculus (Mouse)).